A 529-amino-acid polypeptide reads, in one-letter code: Glycerol kinase 5 (529 aa).

ATP contacts are provided by Thr22 and Thr23. The glycerol site is built by Arg92, Asp269, and Gln270. ATP contacts are provided by Thr291, Gly334, and Gly434.

This sequence belongs to the FGGY kinase family.

It localises to the cytoplasm. The catalysed reaction is glycerol + ATP = sn-glycerol 3-phosphate + ADP + H(+). It participates in polyol metabolism; glycerol degradation via glycerol kinase pathway; sn-glycerol 3-phosphate from glycerol: step 1/1. In terms of biological role, skin-specific kinase that plays a key role in glycerol metabolism, catalyzing its phosphorylation to produce sn-glycerol 3-phosphate. Involved in skin-specific regulation of sterol regulatory element-binding protein (SREBP) processing and lipid biosynthesis. In Danio rerio (Zebrafish), this protein is Glycerol kinase 5 (gk5).